The following is a 344-amino-acid chain: MANYTLAPEDEYDVLIEGELESDEAEQCDKYDAQALSAQLVPSLCSAVFVIGVLDNLLVVLILVKYKGLKRVENIYLLNLAVSNLCFLLTLPFWAHAGGDPMCKILIGLYFVGLYSETFFNCLLTVQRYLVFLHKGNFFSARRRVPCGIITSVLAWVTAILATLPEFVVYKPQMEDQKYKCAFSRTPFLPADETFWKHFLTLKMNISVLVLPLFIFTFLYVQMRKTLRFREQRYSLFKLVFAIMVVFLLMWAPYNIAFFLSTFKEHFSLSDCKSSYNLDKSVHITKLIATTHCCINPLLYAFLDGTFSKYLCRCFHLRSNTPLQPRGQSAQGTSREEPDHSTEV.

Residues 1 to 43 (MANYTLAPEDEYDVLIEGELESDEAEQCDKYDAQALSAQLVPS) lie on the Extracellular side of the membrane. Asn-3 is a glycosylation site (N-linked (GlcNAc...) asparagine). Residues 44-64 (LCSAVFVIGVLDNLLVVLILV) traverse the membrane as a helical segment. The Cytoplasmic segment spans residues 65 to 74 (KYKGLKRVEN). The helical transmembrane segment at 75–95 (IYLLNLAVSNLCFLLTLPFWA) threads the bilayer. Residues 96–104 (HAGGDPMCK) lie on the Extracellular side of the membrane. Residues Cys-103 and Cys-181 are joined by a disulfide bond. A helical membrane pass occupies residues 105-125 (ILIGLYFVGLYSETFFNCLLT). The Cytoplasmic segment spans residues 126–144 (VQRYLVFLHKGNFFSARRR). A helical membrane pass occupies residues 145-165 (VPCGIITSVLAWVTAILATLP). The Extracellular segment spans residues 166–198 (EFVVYKPQMEDQKYKCAFSRTPFLPADETFWKH). The chain crosses the membrane as a helical span at residues 199–219 (FLTLKMNISVLVLPLFIFTFL). Residues 220–238 (YVQMRKTLRFREQRYSLFK) are Cytoplasmic-facing. A helical transmembrane segment spans residues 239–259 (LVFAIMVVFLLMWAPYNIAFF). Topologically, residues 260–286 (LSTFKEHFSLSDCKSSYNLDKSVHITK) are extracellular. The chain crosses the membrane as a helical span at residues 287–307 (LIATTHCCINPLLYAFLDGTF). The Cytoplasmic portion of the chain corresponds to 308 to 344 (SKYLCRCFHLRSNTPLQPRGQSAQGTSREEPDHSTEV). Residues 324-333 (QPRGQSAQGT) show a composition bias toward polar residues. The interval 324-344 (QPRGQSAQGTSREEPDHSTEV) is disordered. Over residues 334 to 344 (SREEPDHSTEV) the composition is skewed to basic and acidic residues.

Belongs to the G-protein coupled receptor 1 family. As to expression, expressed abundantly in immunal tissues such as spleen, fetal liver, lymph node and bone marrow. Strong expression also in lung and heart. Expressed in almost all hematopoietic cells including monocytes, macrophages, PMNs, T-cells (both CD4+ and CD8+), monocyte-derived iDCs, NK cells, and CD34+ progenitor cells. B-cells expressed isoform 1 but not isoform 2. Up-regulated on synovial neutrophils of rheumatoid arthritis patients.

Its subcellular location is the cell membrane. In terms of biological role, receptor for CCL19 and chemerin/RARRES2. Does not appear to be a signaling receptor, but may have a role in modulating chemokine-triggered immune responses by capturing and internalizing CCL19 or by presenting RARRES2 ligand to CMKLR1, a functional signaling receptors. Plays a critical role for the development of Th2 responses. This is C-C chemokine receptor-like 2 (CCRL2) from Homo sapiens (Human).